Here is a 746-residue protein sequence, read N- to C-terminus: tRNA(Met) cytidine acetyltransferase TmcA (746 aa).

The interval 181 to 200 (ARAETGGNPPSPGDSACRTE) is disordered. ATP is bound by residues Q202, 228–237 (GRGKSAALGI), and R370. Residues 405–617 (VAVERLDRDA…VHLPHQLADP (213 aa)) enclose the N-acetyltransferase domain. Residues 517-519 (IAV), 524-530 (QGQGLGT), E557, and R564 each bind acetyl-CoA.

This sequence belongs to the RNA cytidine acetyltransferase family. TmcA subfamily.

Its subcellular location is the cytoplasm. The catalysed reaction is cytidine(34) in elongator tRNA(Met) + acetyl-CoA + ATP + H2O = N(4)-acetylcytidine(34) in elongator tRNA(Met) + ADP + phosphate + CoA + H(+). In terms of biological role, catalyzes the formation of N(4)-acetylcytidine (ac(4)C) at the wobble position of tRNA(Met), by using acetyl-CoA as an acetyl donor and ATP (or GTP). This Nitrosococcus halophilus (strain Nc4) protein is tRNA(Met) cytidine acetyltransferase TmcA.